A 453-amino-acid polypeptide reads, in one-letter code: Glutamyl-tRNA reductase (453 aa).

Residues threonine 54–arginine 57, serine 113, glutamate 118–glutamine 120, and glutamine 124 contribute to the substrate site. The Nucleophile role is filled by cysteine 55. NADP(+) is bound at residue glycine 193–serine 198.

Belongs to the glutamyl-tRNA reductase family. Homodimer.

It catalyses the reaction (S)-4-amino-5-oxopentanoate + tRNA(Glu) + NADP(+) = L-glutamyl-tRNA(Glu) + NADPH + H(+). The protein operates within porphyrin-containing compound metabolism; protoporphyrin-IX biosynthesis; 5-aminolevulinate from L-glutamyl-tRNA(Glu): step 1/2. It participates in porphyrin-containing compound metabolism; chlorophyll biosynthesis. Functionally, catalyzes the NADPH-dependent reduction of glutamyl-tRNA(Glu) to glutamate 1-semialdehyde (GSA). This is Glutamyl-tRNA reductase from Chloroflexus aggregans (strain MD-66 / DSM 9485).